A 1911-amino-acid chain; its full sequence is Protein TIC 214 (1911 aa).

The next 6 helical transmembrane spans lie at 41 to 61 (IINS…FSIG), 81 to 103 (ISAT…YAPL), 108 to 128 (GKPH…FFWN), 147 to 167 (FNIQ…HFIL), 195 to 215 (IGWL…LFWI), and 238 to 258 (IFSI…PLPI). Disordered regions lie at residues 265–299 (ETSE…STEE), 798–817 (DSEE…KEEN), and 1599–1647 (NQNQ…RKKK). The segment covering 268–297 (ETEESEENEEESDIEITSEPKEQDEEEGST) has biased composition (acidic residues). Composition is skewed to basic and acidic residues over residues 1603 to 1615 (QEKK…RDLG) and 1623 to 1635 (QKQK…EKNY).

Belongs to the TIC214 family. Part of the Tic complex.

It is found in the plastid. The protein localises to the chloroplast inner membrane. In terms of biological role, involved in protein precursor import into chloroplasts. May be part of an intermediate translocation complex acting as a protein-conducting channel at the inner envelope. The sequence is that of Protein TIC 214 from Lemna minor (Common duckweed).